We begin with the raw amino-acid sequence, 506 residues long: Deoxyguanosinetriphosphate triphosphohydrolase (506 aa).

The HD domain maps to arginine 66–cysteine 274.

Belongs to the dGTPase family. Type 1 subfamily. In terms of assembly, homotetramer. The cofactor is Mg(2+).

It carries out the reaction dGTP + H2O = 2'-deoxyguanosine + triphosphate + H(+). Functionally, dGTPase preferentially hydrolyzes dGTP over the other canonical NTPs. The protein is Deoxyguanosinetriphosphate triphosphohydrolase of Yersinia pestis bv. Antiqua (strain Antiqua).